Reading from the N-terminus, the 782-residue chain is DnaJ homolog subfamily C member 16 (782 aa).

Residues 1–25 form the signal peptide; it reads MEVRKLSISWQFLIVLVLILQILSA. Over 26–535 the chain is Cytoplasmic; that stretch reads LDFDPYKVLG…DSIFHNNWRE (510 aa). Positions 29-93 constitute a J domain; sequence DPYKVLGVSR…EKRSNYDQYG (65 aa). The Thioredoxin domain maps to 119–247; the sequence is FYFDESFFHF…LRQFVESLLP (129 aa). Residues 536–556 form a helical; Anchor for type IV membrane protein membrane-spanning segment; it reads MMPLLSLIFSALFILFGTVIV. Over 557–782 the chain is Extracellular; that stretch reads QAFSDSSDER…FYIPSWPELD (226 aa). The interval 562-593 is disordered; that stretch reads SSDERESSPPDKEEAQEKTGKTEPSFTKENSS. A compositionally biased stretch (basic and acidic residues) spans 563–582; that stretch reads SDERESSPPDKEEAQEKTGK. Residues 583-593 are compositionally biased toward polar residues; it reads TEPSFTKENSS. N631 carries an N-linked (GlcNAc...) asparagine glycan.

The protein localises to the endoplasmic reticulum membrane. Functionally, plays an important role in regulating the size of autophagosomes during the formation process. The protein is DnaJ homolog subfamily C member 16 (DNAJC16) of Pongo abelii (Sumatran orangutan).